A 130-amino-acid chain; its full sequence is Iron-sulfur cluster assembly 1 homolog, mitochondrial (130 aa).

The N-terminal 24 residues, Met1 to Ala24, are a transit peptide targeting the mitochondrion. Fe cation is bound by residues Cys58, Cys122, and Cys124.

The protein belongs to the HesB/IscA family. Interacts with cry. In terms of tissue distribution, detected in head.

It localises to the mitochondrion. Functionally, involved in the assembly of mitochondrial iron-sulfur proteins. Probably involved in the binding of an intermediate of Fe/S cluster assembly. Required for maintenance of circadian rhythms under constant darkness. The chain is Iron-sulfur cluster assembly 1 homolog, mitochondrial from Drosophila melanogaster (Fruit fly).